A 270-amino-acid chain; its full sequence is (+)-cis,cis-nepetalactol synthase NEPS3 (270 aa).

Residues 21-27 (GGASGIG), 46-48 (DIQ), 70-71 (DV), N97, 165-169 (YVMSK), and 198-202 (VATPL) each bind NAD(+).

It belongs to the short-chain dehydrogenases/reductases (SDR) family. As to quaternary structure, forms homotetramers.

It catalyses the reaction (S)-8-oxocitronellyl enol = cis-cis-nepetalactol. In terms of biological role, functions as a non-oxidoreductive cyclase to promote the formation of cis-cis-nepetalactol. Cis-cis-nepetalactol is then oxidized by NEPS1 into cis-cis-nepetalactone, which belongs to a family of metabolites that are both insect-repellent and have euphoric effect in cats. Binds NAD(+) as classical short-chain dehydrogenase/reductase (SDR), but does not utilize it for its redox-neutral cyclase activity. This chain is (+)-cis,cis-nepetalactol synthase NEPS3, found in Nepeta racemosa (Catmint).